The chain runs to 823 residues: Dimethyl sulfoxide/trimethylamine N-oxide reductase (823 aa).

Residues 1–42 (MTKFSGNELRAELYRRAFLSYSVAPGALGMFGRSLLAKGARA) constitute a signal peptide (tat-type signal). Mo-bis(molybdopterin guanine dinucleotide) contacts are provided by residues 156 to 160 (YGWKS), Trp158, Ser189, 232 to 233 (KT), 262 to 263 (ID), 283 to 285 (QTD), 364 to 365 (WS), Arg368, Asn476, His480, 500 to 501 (HD), Arg523, Asp553, 685 to 686 (HP), 691 to 693 (HSQ), Asn779, and 796 to 797 (GQ).

As to quaternary structure, homodimer. The cofactor is Mo-bis(molybdopterin guanine dinucleotide). Post-translationally, predicted to be exported by the Tat system. The position of the signal peptide cleavage has been experimentally proven.

The protein resides in the periplasm. The catalysed reaction is dimethyl sulfide + a menaquinone + H2O = dimethyl sulfoxide + a menaquinol. It catalyses the reaction trimethylamine + 2 Fe(III)-[cytochrome c] + H2O = trimethylamine N-oxide + 2 Fe(II)-[cytochrome c] + 3 H(+). Catalyzes the reduction of dimethyl sulfoxide (DMSO) and trimethylamine N-oxide (TMAO) to dimethyl sulfide (DMS) and trimethylamine, respectively. The terminal DMSO reductase can also use various sulfoxides and N-oxide compounds as terminal electron acceptor in addition to DMSO and TMAO. This chain is Dimethyl sulfoxide/trimethylamine N-oxide reductase (dorA), found in Rhodobacter capsulatus (Rhodopseudomonas capsulata).